The chain runs to 290 residues: Light-independent protochlorophyllide reductase iron-sulfur ATP-binding protein (290 aa).

ATP-binding positions include 10-15 and lysine 39; that span reads GIGKST. Position 14 (serine 14) interacts with Mg(2+). Residues cysteine 95 and cysteine 129 each coordinate [4Fe-4S] cluster. Residue 180–181 coordinates ATP; the sequence is NR.

It belongs to the NifH/BchL/ChlL family. Homodimer. Protochlorophyllide reductase is composed of three subunits; ChlL, ChlN and ChlB. Requires [4Fe-4S] cluster as cofactor.

The protein localises to the plastid. It is found in the chloroplast. It carries out the reaction chlorophyllide a + oxidized 2[4Fe-4S]-[ferredoxin] + 2 ADP + 2 phosphate = protochlorophyllide a + reduced 2[4Fe-4S]-[ferredoxin] + 2 ATP + 2 H2O. Its pathway is porphyrin-containing compound metabolism; chlorophyll biosynthesis (light-independent). Functionally, component of the dark-operative protochlorophyllide reductase (DPOR) that uses Mg-ATP and reduced ferredoxin to reduce ring D of protochlorophyllide (Pchlide) to form chlorophyllide a (Chlide). This reaction is light-independent. The L component serves as a unique electron donor to the NB-component of the complex, and binds Mg-ATP. The polypeptide is Light-independent protochlorophyllide reductase iron-sulfur ATP-binding protein (Cycas taitungensis (Prince sago)).